A 248-amino-acid chain; its full sequence is 1-(5-phosphoribosyl)-5-[(5-phosphoribosylamino)methylideneamino] imidazole-4-carboxamide isomerase (248 aa).

Catalysis depends on Asp-7, which acts as the Proton acceptor. Catalysis depends on Asp-131, which acts as the Proton donor.

Belongs to the HisA/HisF family.

Its subcellular location is the cytoplasm. It carries out the reaction 1-(5-phospho-beta-D-ribosyl)-5-[(5-phospho-beta-D-ribosylamino)methylideneamino]imidazole-4-carboxamide = 5-[(5-phospho-1-deoxy-D-ribulos-1-ylimino)methylamino]-1-(5-phospho-beta-D-ribosyl)imidazole-4-carboxamide. It participates in amino-acid biosynthesis; L-histidine biosynthesis; L-histidine from 5-phospho-alpha-D-ribose 1-diphosphate: step 4/9. The sequence is that of 1-(5-phosphoribosyl)-5-[(5-phosphoribosylamino)methylideneamino] imidazole-4-carboxamide isomerase from Baumannia cicadellinicola subsp. Homalodisca coagulata.